Consider the following 118-residue polypeptide: Beta-2-microglobulin (118 aa).

The first 20 residues, 1-20 (MAVSAALVLLGLLSLSGLDA), serve as a signal peptide directing secretion. In terms of domain architecture, Ig-like C1-type spans 25-112 (PEVQVYSRHP…HVTLTQPKIV (88 aa)). A disulfide bridge connects residues Cys-45 and Cys-99.

It belongs to the beta-2-microglobulin family. In terms of assembly, heterodimer of an alpha chain and a beta chain. Beta-2-microglobulin is the beta-chain of major histocompatibility complex class I molecules.

The protein resides in the secreted. Functionally, component of the class I major histocompatibility complex (MHC). Involved in the presentation of peptide antigens to the immune system. This Ovis aries (Sheep) protein is Beta-2-microglobulin (B2M).